A 274-amino-acid polypeptide reads, in one-letter code: 2,3,4,5-tetrahydropyridine-2,6-dicarboxylate N-succinyltransferase (274 aa).

Positions 104 and 141 each coordinate substrate.

This sequence belongs to the transferase hexapeptide repeat family. As to quaternary structure, homotrimer.

It is found in the cytoplasm. It catalyses the reaction (S)-2,3,4,5-tetrahydrodipicolinate + succinyl-CoA + H2O = (S)-2-succinylamino-6-oxoheptanedioate + CoA. It functions in the pathway amino-acid biosynthesis; L-lysine biosynthesis via DAP pathway; LL-2,6-diaminopimelate from (S)-tetrahydrodipicolinate (succinylase route): step 1/3. This is 2,3,4,5-tetrahydropyridine-2,6-dicarboxylate N-succinyltransferase from Shewanella baltica (strain OS155 / ATCC BAA-1091).